Here is a 191-residue protein sequence, read N- to C-terminus: Small ribosomal subunit protein uS5 (191 aa).

The disordered stretch occupies residues 1–21; it reads MAAERERGGRERSREREERDS. Positions 23-86 constitute an S5 DRBM domain; it reads FVDKLVHINR…ESAKRNLTRV (64 aa).

Part of the 30S ribosomal subunit. Contacts proteins S4 and S8.

With S4 and S12 plays an important role in translational accuracy. Functionally, located at the back of the 30S subunit body where it stabilizes the conformation of the head with respect to the body. This chain is Small ribosomal subunit protein uS5, found in Rhodopseudomonas palustris (strain ATCC BAA-98 / CGA009).